Reading from the N-terminus, the 127-residue chain is Fatty acid-binding protein, liver (127 aa).

Position 1 is an N-acetylmethionine (Met-1). Ser-11 carries the post-translational modification Phosphoserine. Lys-31 and Lys-36 each carry N6-succinyllysine. Ser-39 bears the Phosphoserine mark. Residue Lys-46 is modified to N6-succinyllysine. A Phosphothreonine modification is found at Thr-51. 2 positions are modified to N6-succinyllysine: Lys-57 and Lys-78. At Lys-84 the chain carries N6-acetyllysine; alternate. An N6-succinyllysine; alternate modification is found at Lys-84. Lys-90 carries the post-translational modification N6-succinyllysine. At Ser-100 the chain carries Phosphoserine. An N6-succinyllysine modification is found at Lys-121.

Belongs to the calycin superfamily. Fatty-acid binding protein (FABP) family.

Its subcellular location is the cytoplasm. Functionally, plays a role in lipoprotein-mediated cholesterol uptake in hepatocytes. Binds cholesterol. Binds free fatty acids and their coenzyme A derivatives, bilirubin, and some other small molecules in the cytoplasm. May be involved in intracellular lipid transport. The polypeptide is Fatty acid-binding protein, liver (Fabp1) (Mus musculus (Mouse)).